Reading from the N-terminus, the 1177-residue chain is Phospholipid-transporting ATPase IF (1177 aa).

Topologically, residues 1-55 are cytoplasmic; it reads MWRWIRQQLGFDPPHQSDTRTIYVANRFPQNGLYTPQKFIDNRIISSKYTVWNFV. The helical transmembrane segment at 56 to 77 threads the bilayer; that stretch reads PKNLFEQFRRVANFYFLIIFLV. Residues 78-82 lie on the Extracellular side of the membrane; it reads QLMID. Residues 83-104 traverse the membrane as a helical segment; the sequence is TPTSPVTSGLPLFFVITVTAIK. Topologically, residues 105-289 are cytoplasmic; that stretch reads QGYEDWLRHN…SAVEKSMNTF (185 aa). Residues 290–311 traverse the membrane as a helical segment; the sequence is LIIYLVILISEAVISTILKYTW. Topologically, residues 312–341 are extracellular; that stretch reads QAEEKWDEPWYNQKTEHQRNSSKILRFISD. A helical transmembrane segment spans residues 342–359; sequence FLAFLVLYNFIIPISLYV. Residues 360–876 are Cytoplasmic-facing; the sequence is TVEMQKFLGS…HGHFYYIRIA (517 aa). The active-site 4-aspartylphosphate intermediate is aspartate 407. ATP is bound by residues aspartate 407, lysine 408, threonine 409, glutamate 531, phenylalanine 572, lysine 595, arginine 626, threonine 706, glycine 707, aspartate 708, arginine 794, and lysine 800. Aspartate 407 serves as a coordination point for Mg(2+). Threonine 409 lines the Mg(2+) pocket. Aspartate 821 is a binding site for Mg(2+). Asparagine 824 and aspartate 825 together coordinate ATP. Aspartate 825 contacts Mg(2+). The chain crosses the membrane as a helical span at residues 877 to 898; it reads TLVQYFFYKNVCFITPQFLYQF. Residues 899 to 910 lie on the Extracellular side of the membrane; it reads YCLFSQQTLYDS. Residues 911-930 form a helical membrane-spanning segment; it reads VYLTLYNICFTSLPILIYSL. Residues 931–960 lie on the Cytoplasmic side of the membrane; that stretch reads LEQHVDPHVLQNKPTLYRDISKNRLLSIKT. Residues 961 to 982 form a helical membrane-spanning segment; the sequence is FLYWTILGFSHAFIFFFGSYLL. Residues 983-997 are Extracellular-facing; sequence IGKDTSLLGNGQMFG. The chain crosses the membrane as a helical span at residues 998–1020; it reads NWTFGTLVFTVMVITVTVKMALE. Residues 1021–1025 are Cytoplasmic-facing; the sequence is THFWT. Residues 1026–1047 form a helical membrane-spanning segment; sequence WINHLVTWGSIIFYFVFSLFYG. Residues 1048–1065 lie on the Extracellular side of the membrane; it reads GILWPFLGSQNMYFVFIQ. A helical membrane pass occupies residues 1066 to 1090; it reads LLSSGSAWFAIILMVVTCLFLDIIK. Topologically, residues 1091 to 1177 are cytoplasmic; that stretch reads KVFDRHLHPT…TLSTMDSSTC (87 aa). Position 1154 is a phosphoserine (serine 1154).

Belongs to the cation transport ATPase (P-type) (TC 3.A.3) family. Type IV subfamily. Component of a P4-ATPase flippase complex which consists of a catalytic alpha subunit ATP11B and an accessory beta subunit TMEM30A. Requires Mg(2+) as cofactor.

It localises to the recycling endosome membrane. Its subcellular location is the early endosome. It is found in the endoplasmic reticulum. The protein resides in the golgi apparatus. The protein localises to the trans-Golgi network. The catalysed reaction is ATP + H2O + phospholipidSide 1 = ADP + phosphate + phospholipidSide 2.. It carries out the reaction a 1,2-diacyl-sn-glycero-3-phospho-L-serine(out) + ATP + H2O = a 1,2-diacyl-sn-glycero-3-phospho-L-serine(in) + ADP + phosphate + H(+). It catalyses the reaction a 1,2-diacyl-sn-glycero-3-phosphoethanolamine(out) + ATP + H2O = a 1,2-diacyl-sn-glycero-3-phosphoethanolamine(in) + ADP + phosphate + H(+). The ATPase activity is up-regulated by aminophospholipids PS and PE. In terms of biological role, catalytic component of a P4-ATPase flippase complex which catalyzes the hydrolysis of ATP coupled to the transport of aminophospholipids, phosphatidylserines (PS) and phosphatidylethanolamines (PE), from the outer to the inner leaflet of intracellular membranes. May contribute to the maintenance of membrane lipid asymmetry in endosome compartment. The sequence is that of Phospholipid-transporting ATPase IF (ATP11B) from Homo sapiens (Human).